A 215-amino-acid chain; its full sequence is ATP-dependent dethiobiotin synthetase BioD (215 aa).

13–18 (DIGKTI) is a binding site for ATP. Thr17 lines the Mg(2+) pocket. Lys38 is a catalytic residue. Thr42 lines the substrate pocket. Residues Asp50, 115–118 (EGAG), and 175–176 (NH) each bind ATP. Mg(2+) is bound by residues Asp50 and Glu115.

This sequence belongs to the dethiobiotin synthetase family. Homodimer. Mg(2+) is required as a cofactor.

The protein localises to the cytoplasm. It carries out the reaction (7R,8S)-7,8-diammoniononanoate + CO2 + ATP = (4R,5S)-dethiobiotin + ADP + phosphate + 3 H(+). The protein operates within cofactor biosynthesis; biotin biosynthesis; biotin from 7,8-diaminononanoate: step 1/2. Its function is as follows. Catalyzes a mechanistically unusual reaction, the ATP-dependent insertion of CO2 between the N7 and N8 nitrogen atoms of 7,8-diaminopelargonic acid (DAPA, also called 7,8-diammoniononanoate) to form a ureido ring. This is ATP-dependent dethiobiotin synthetase BioD from Neisseria meningitidis serogroup A / serotype 4A (strain DSM 15465 / Z2491).